A 160-amino-acid polypeptide reads, in one-letter code: Protein MGF 110-13L (160 aa).

2 consecutive transmembrane segments (helical) span residues 13-33 (HCCFYLVFSIAFVGYIVFAYY) and 35-55 (NLHLNTTMKLIALLCILIWLS).

Belongs to the asfivirus MGF 110 family.

Its subcellular location is the host membrane. Plays a role in virus cell tropism, and may be required for efficient virus replication in macrophages. The sequence is that of Protein MGF 110-13L from Ornithodoros (relapsing fever ticks).